The following is a 158-amino-acid chain: S-ribosylhomocysteine lyase (158 aa).

Fe cation contacts are provided by H56, H60, and C125.

It belongs to the LuxS family. In terms of assembly, homodimer. It depends on Fe cation as a cofactor.

The enzyme catalyses S-(5-deoxy-D-ribos-5-yl)-L-homocysteine = (S)-4,5-dihydroxypentane-2,3-dione + L-homocysteine. Its function is as follows. Involved in the synthesis of autoinducer 2 (AI-2) which is secreted by bacteria and is used to communicate both the cell density and the metabolic potential of the environment. The regulation of gene expression in response to changes in cell density is called quorum sensing. Catalyzes the transformation of S-ribosylhomocysteine (RHC) to homocysteine (HC) and 4,5-dihydroxy-2,3-pentadione (DPD). This is S-ribosylhomocysteine lyase from Leuconostoc mesenteroides subsp. mesenteroides (strain ATCC 8293 / DSM 20343 / BCRC 11652 / CCM 1803 / JCM 6124 / NCDO 523 / NBRC 100496 / NCIMB 8023 / NCTC 12954 / NRRL B-1118 / 37Y).